A 744-amino-acid polypeptide reads, in one-letter code: FNIP repeat-containing protein cigB (744 aa).

9 FNIP repeats span residues 340–376 (FNQK…TVTT), 383–422 (FNQK…TVIL), 426–462 (FNQK…TVTR), 469–508 (FNQK…TITL), 512–550 (FNQK…TTVR), 555–594 (FNQK…TVIL), 598–635 (FNQK…VTTV), 641–678 (FNQK…VTTV), and 684–723 (FNQK…NVYI).

The polypeptide is FNIP repeat-containing protein cigB (cigB) (Dictyostelium discoideum (Social amoeba)).